The following is a 75-amino-acid chain: Large ribosomal subunit protein bL31 (75 aa).

Cys-16, Cys-18, Cys-37, and Cys-40 together coordinate Zn(2+).

The protein belongs to the bacterial ribosomal protein bL31 family. Type A subfamily. In terms of assembly, part of the 50S ribosomal subunit. It depends on Zn(2+) as a cofactor.

Functionally, binds the 23S rRNA. The protein is Large ribosomal subunit protein bL31 of Pseudomonas syringae pv. tomato (strain ATCC BAA-871 / DC3000).